Consider the following 63-residue polypeptide: MANDCKCPNGCSCPNCANGGCQCGDKCECKKQSCHGCGEQCKCGSHGSSCHGSCGCGDKCECK.

2 repeats span residues 23–30 (CGDKCECK) and 56–63 (CGDKCECK).

It belongs to the metallothionein superfamily. Type 9 family.

In terms of biological role, the metallothioneins are involved in the cellular sequestration of toxic metal ions. This is Metallothionein-1 (MT-I) from Candida glabrata (strain ATCC 2001 / BCRC 20586 / JCM 3761 / NBRC 0622 / NRRL Y-65 / CBS 138) (Yeast).